Reading from the N-terminus, the 223-residue chain is UPF0441 protein YgiB (223 aa).

Residues 201–223 are disordered; that stretch reads ESVAKQSAMQRSAAGTSTRSMGG. Residues 204–223 show a composition bias toward polar residues; the sequence is AKQSAMQRSAAGTSTRSMGG.

The protein belongs to the UPF0441 family.

This chain is UPF0441 protein YgiB, found in Salmonella arizonae (strain ATCC BAA-731 / CDC346-86 / RSK2980).